A 201-amino-acid polypeptide reads, in one-letter code: Small ribosomal subunit protein uS10m (201 aa).

The protein belongs to the universal ribosomal protein uS10 family. Component of the mitochondrial small ribosomal subunit (mt-SSU). Mature mammalian 55S mitochondrial ribosomes consist of a small (28S) and a large (39S) subunit. The 28S small subunit contains a 12S ribosomal RNA (12S mt-rRNA) and 30 different proteins. The 39S large subunit contains a 16S rRNA (16S mt-rRNA), a copy of mitochondrial valine transfer RNA (mt-tRNA(Val)), which plays an integral structural role, and 52 different proteins.

The protein localises to the mitochondrion. The chain is Small ribosomal subunit protein uS10m (MRPS10) from Homo sapiens (Human).